The sequence spans 229 residues: Cytochrome c oxidase subunit 2 (229 aa).

Residues 1–14 are Mitochondrial intermembrane-facing; it reads MANPSQFGFQDASS. Residues 15-45 form a helical membrane-spanning segment; sequence PIMEELVEFHDHALMVALAICSLVLYLLALM. At 46–58 the chain is on the mitochondrial matrix side; it reads LVEKLSSNTVDAQ. The helical transmembrane segment at 59–86 threads the bilayer; it reads EVELIWTILPAIVLILLALPSLQILYMM. The Mitochondrial intermembrane segment spans residues 87–229; the sequence is DEIDEPDLTL…SWSSLLSTDS (143 aa). The Cu cation site is built by histidine 160, cysteine 195, glutamate 197, cysteine 199, histidine 203, and methionine 206. Glutamate 197 contacts Mg(2+).

The protein belongs to the cytochrome c oxidase subunit 2 family. In terms of assembly, component of the cytochrome c oxidase (complex IV, CIV), a multisubunit enzyme composed of 14 subunits. The complex is composed of a catalytic core of 3 subunits MT-CO1, MT-CO2 and MT-CO3, encoded in the mitochondrial DNA, and 11 supernumerary subunits COX4I, COX5A, COX5B, COX6A, COX6B, COX6C, COX7A, COX7B, COX7C, COX8 and NDUFA4, which are encoded in the nuclear genome. The complex exists as a monomer or a dimer and forms supercomplexes (SCs) in the inner mitochondrial membrane with NADH-ubiquinone oxidoreductase (complex I, CI) and ubiquinol-cytochrome c oxidoreductase (cytochrome b-c1 complex, complex III, CIII), resulting in different assemblies (supercomplex SCI(1)III(2)IV(1) and megacomplex MCI(2)III(2)IV(2)). Found in a complex with TMEM177, COA6, COX18, COX20, SCO1 and SCO2. Interacts with TMEM177 in a COX20-dependent manner. Interacts with COX20. Interacts with COX16. It depends on Cu cation as a cofactor.

It localises to the mitochondrion inner membrane. It catalyses the reaction 4 Fe(II)-[cytochrome c] + O2 + 8 H(+)(in) = 4 Fe(III)-[cytochrome c] + 2 H2O + 4 H(+)(out). Its function is as follows. Component of the cytochrome c oxidase, the last enzyme in the mitochondrial electron transport chain which drives oxidative phosphorylation. The respiratory chain contains 3 multisubunit complexes succinate dehydrogenase (complex II, CII), ubiquinol-cytochrome c oxidoreductase (cytochrome b-c1 complex, complex III, CIII) and cytochrome c oxidase (complex IV, CIV), that cooperate to transfer electrons derived from NADH and succinate to molecular oxygen, creating an electrochemical gradient over the inner membrane that drives transmembrane transport and the ATP synthase. Cytochrome c oxidase is the component of the respiratory chain that catalyzes the reduction of oxygen to water. Electrons originating from reduced cytochrome c in the intermembrane space (IMS) are transferred via the dinuclear copper A center (CU(A)) of subunit 2 and heme A of subunit 1 to the active site in subunit 1, a binuclear center (BNC) formed by heme A3 and copper B (CU(B)). The BNC reduces molecular oxygen to 2 water molecules using 4 electrons from cytochrome c in the IMS and 4 protons from the mitochondrial matrix. The chain is Cytochrome c oxidase subunit 2 (MT-CO2) from Struthio camelus (Common ostrich).